We begin with the raw amino-acid sequence, 506 residues long: Maturase K (506 aa).

It belongs to the intron maturase 2 family. MatK subfamily.

The protein localises to the plastid. It localises to the chloroplast. Usually encoded in the trnK tRNA gene intron. Probably assists in splicing its own and other chloroplast group II introns. The chain is Maturase K from Trifolium willdenovii (Tomcat clover).